A 317-amino-acid polypeptide reads, in one-letter code: Methionyl-tRNA formyltransferase (317 aa).

112–115 (SLLP) provides a ligand contact to (6S)-5,6,7,8-tetrahydrofolate.

The protein belongs to the Fmt family.

It catalyses the reaction L-methionyl-tRNA(fMet) + (6R)-10-formyltetrahydrofolate = N-formyl-L-methionyl-tRNA(fMet) + (6S)-5,6,7,8-tetrahydrofolate + H(+). Attaches a formyl group to the free amino group of methionyl-tRNA(fMet). The formyl group appears to play a dual role in the initiator identity of N-formylmethionyl-tRNA by promoting its recognition by IF2 and preventing the misappropriation of this tRNA by the elongation apparatus. The protein is Methionyl-tRNA formyltransferase of Histophilus somni (strain 129Pt) (Haemophilus somnus).